A 117-amino-acid polypeptide reads, in one-letter code: Large ribosomal subunit protein bL31B (117 aa).

The segment at 75–117 (KRFERKKEASPADTPPESDSTTENASVEKKAEKKRVTAKGSKK) is disordered. Positions 100 to 109 (SVEKKAEKKR) are enriched in basic and acidic residues.

This sequence belongs to the bacterial ribosomal protein bL31 family. Type B subfamily. Part of the 50S ribosomal subunit.

The chain is Large ribosomal subunit protein bL31B from Protochlamydia amoebophila (strain UWE25).